The primary structure comprises 380 residues: Cytochrome b (380 aa).

4 consecutive transmembrane segments (helical) span residues 34 to 54, 78 to 99, 114 to 134, and 179 to 199; these read FGSLLGICLATQILTGLLLAM, WLIRNLHANGASFFFICVYLHI, WNTGILLLLTLMATAFVGYVL, and FFALHFLLPFAIAGLTLIHLT. Residues His84 and His98 each coordinate heme b. His183 and His197 together coordinate heme b. His202 provides a ligand contact to a ubiquinone. The next 4 helical transmembrane spans lie at 227 to 247, 289 to 309, 321 to 341, and 348 to 368; these read LKDALGFMLMFLPLTTLALFS, LGGVLALAASVLILFLSPLLH, LSQLLFWTLVANLFILTWVGS, and FIIIGQLASLTYFTILLILFP.

This sequence belongs to the cytochrome b family. In terms of assembly, the cytochrome bc1 complex contains 11 subunits: 3 respiratory subunits (MT-CYB, CYC1 and UQCRFS1), 2 core proteins (UQCRC1 and UQCRC2) and 6 low-molecular weight proteins (UQCRH/QCR6, UQCRB/QCR7, UQCRQ/QCR8, UQCR10/QCR9, UQCR11/QCR10 and a cleavage product of UQCRFS1). This cytochrome bc1 complex then forms a dimer. It depends on heme b as a cofactor.

It localises to the mitochondrion inner membrane. Functionally, component of the ubiquinol-cytochrome c reductase complex (complex III or cytochrome b-c1 complex) that is part of the mitochondrial respiratory chain. The b-c1 complex mediates electron transfer from ubiquinol to cytochrome c. Contributes to the generation of a proton gradient across the mitochondrial membrane that is then used for ATP synthesis. The polypeptide is Cytochrome b (MT-CYB) (Oceanites oceanicus (Wilson's storm petrel)).